Reading from the N-terminus, the 97-residue chain is Defensin-like protein 301 (97 aa).

The N-terminal stretch at 1–24 (MEKVTSIFFVLLLISSCLILRSQG) is a signal peptide. 6 cysteine pairs are disulfide-bonded: cysteine 28–cysteine 47, cysteine 34–cysteine 53, cysteine 39–cysteine 55, cysteine 65–cysteine 84, cysteine 71–cysteine 92, and cysteine 76–cysteine 94.

It belongs to the DEFL family.

It is found in the secreted. The polypeptide is Defensin-like protein 301 (Arabidopsis thaliana (Mouse-ear cress)).